Consider the following 273-residue polypeptide: Glucosamine-6-phosphate deaminase (273 aa).

Asp-72 functions as the Proton acceptor; for enolization step in the catalytic mechanism. The active-site For ring-opening step is Asp-141. The Proton acceptor; for ring-opening step role is filled by His-143. Glu-148 acts as the For ring-opening step in catalysis.

The protein belongs to the glucosamine/galactosamine-6-phosphate isomerase family. In terms of assembly, homohexamer.

Its subcellular location is the cytoplasm. It catalyses the reaction alpha-D-glucosamine 6-phosphate + H2O = beta-D-fructose 6-phosphate + NH4(+). It functions in the pathway nucleotide-sugar biosynthesis; UDP-N-acetyl-alpha-D-glucosamine biosynthesis; alpha-D-glucosamine 6-phosphate from D-fructose 6-phosphate: step 1/1. Its function is as follows. Catalyzes the reversible conversion of alpha-D-glucosamine 6-phosphate (GlcN-6P) into beta-D-fructose 6-phosphate (Fru-6P) and ammonium ion, a regulatory reaction step in de novo uridine diphosphate-N-acetyl-alpha-D-glucosamine (UDP-GlcNAc) biosynthesis via hexosamine pathway. The polypeptide is Glucosamine-6-phosphate deaminase (Gnpda1) (Anopheles gambiae (African malaria mosquito)).